The primary structure comprises 783 residues: Cilia- and flagella-associated protein 91 (783 aa).

Over residues 748 to 760 (EDFELEEEAESLD) the composition is skewed to acidic residues. Positions 748–783 (EDFELEEEAESLDSEVPTVSVSKTSTIKPTQDEGEG) are disordered. Residues 764-776 (PTVSVSKTSTIKP) are compositionally biased toward polar residues.

Belongs to the CFAP91 family. As to quaternary structure, part of a complex containing MYCBP, AKAP1 and PRKAR2B. Interacts with MYCBP and AKAP1. Interacts with CFAP61. Post-translationally, phosphorylated by PKA. Expressed in the testis, in cells involved in spermatogenesis.

It localises to the cytoplasm. It is found in the mitochondrion. The protein localises to the cytoskeleton. The protein resides in the cilium axoneme. Its function is as follows. Involved in sperm flagellum axonemal organization and function. May regulate cilium motility through its role in the assembly of the axonemal radial spokes. The chain is Cilia- and flagella-associated protein 91 from Mus musculus (Mouse).